Reading from the N-terminus, the 34-residue chain is Photosystem II reaction center protein M (34 aa).

Residues Ile5 to Ile25 form a helical membrane-spanning segment.

Belongs to the PsbM family. As to quaternary structure, PSII is composed of 1 copy each of membrane proteins PsbA, PsbB, PsbC, PsbD, PsbE, PsbF, PsbH, PsbI, PsbJ, PsbK, PsbL, PsbM, PsbT, PsbX, PsbY, PsbZ, Psb30/Ycf12, at least 3 peripheral proteins of the oxygen-evolving complex and a large number of cofactors. It forms dimeric complexes.

It localises to the plastid. The protein localises to the chloroplast thylakoid membrane. Its function is as follows. One of the components of the core complex of photosystem II (PSII). PSII is a light-driven water:plastoquinone oxidoreductase that uses light energy to abstract electrons from H(2)O, generating O(2) and a proton gradient subsequently used for ATP formation. It consists of a core antenna complex that captures photons, and an electron transfer chain that converts photonic excitation into a charge separation. This subunit is found at the monomer-monomer interface. This Calycanthus floridus var. glaucus (Eastern sweetshrub) protein is Photosystem II reaction center protein M.